A 365-amino-acid polypeptide reads, in one-letter code: UDP-N-acetylglucosamine--N-acetylmuramyl-(pentapeptide) pyrophosphoryl-undecaprenol N-acetylglucosamine transferase (365 aa).

Residues 10-12 (TGG), Asn-128, Arg-170, Ser-199, Ile-250, and Gln-295 each bind UDP-N-acetyl-alpha-D-glucosamine.

It belongs to the glycosyltransferase 28 family. MurG subfamily.

It is found in the cell inner membrane. The enzyme catalyses di-trans,octa-cis-undecaprenyl diphospho-N-acetyl-alpha-D-muramoyl-L-alanyl-D-glutamyl-meso-2,6-diaminopimeloyl-D-alanyl-D-alanine + UDP-N-acetyl-alpha-D-glucosamine = di-trans,octa-cis-undecaprenyl diphospho-[N-acetyl-alpha-D-glucosaminyl-(1-&gt;4)]-N-acetyl-alpha-D-muramoyl-L-alanyl-D-glutamyl-meso-2,6-diaminopimeloyl-D-alanyl-D-alanine + UDP + H(+). The protein operates within cell wall biogenesis; peptidoglycan biosynthesis. Cell wall formation. Catalyzes the transfer of a GlcNAc subunit on undecaprenyl-pyrophosphoryl-MurNAc-pentapeptide (lipid intermediate I) to form undecaprenyl-pyrophosphoryl-MurNAc-(pentapeptide)GlcNAc (lipid intermediate II). The polypeptide is UDP-N-acetylglucosamine--N-acetylmuramyl-(pentapeptide) pyrophosphoryl-undecaprenol N-acetylglucosamine transferase (Chlorobium luteolum (strain DSM 273 / BCRC 81028 / 2530) (Pelodictyon luteolum)).